The sequence spans 334 residues: DNA polymerase beta (334 aa).

Lys60, Leu62, and Val65 together coordinate K(+). Lys60, Leu62, and Val65 together coordinate Na(+). Lys72 acts as the Nucleophile; Schiff-base intermediate with DNA; for 5'-dRP lyase activity in catalysis. Arg83 is subject to Omega-N-methylarginine; by PRMT6. Residues Thr101, Val103, and Ile106 each contribute to the K(+) site. Thr101, Val103, and Ile106 together coordinate Na(+). Arg149 contributes to the a 2'-deoxyribonucleoside 5'-triphosphate binding site. Arg152 is modified (omega-N-methylarginine; by PRMT6). A 2'-deoxyribonucleoside 5'-triphosphate-binding residues include Ser180, Arg183, Gly189, and Asp190. The DNA-binding stretch occupies residues 183-192; sequence RGAESSGDMD. The Mg(2+) site is built by Asp190, Asp192, and Asp255.

It belongs to the DNA polymerase type-X family. In terms of assembly, monomer. Mg(2+) is required as a cofactor. Methylation by PRMT6 stimulates the polymerase activity by enhancing DNA binding and processivity. In terms of processing, ubiquitinated: monoubiquitinated by huwe1/arf-bp1. Monoubiquitinated protein is then the target of stub1/chip, which catalyzes polyubiquitination from monoubiquitin, leading to degradation by the proteasome. usp47 mediates the deubiquitination of monoubiquitinated protein, preventing polyubiquitination by STUB1/CHIP and its subsequent degradation.

It is found in the nucleus. It localises to the cytoplasm. The catalysed reaction is DNA(n) + a 2'-deoxyribonucleoside 5'-triphosphate = DNA(n+1) + diphosphate. The enzyme catalyses a 5'-end 2'-deoxyribose-2'-deoxyribonucleotide-DNA = (2E,4S)-4-hydroxypenten-2-al-5-phosphate + a 5'-end 5'-phospho-2'-deoxyribonucleoside-DNA + H(+). It carries out the reaction 2'-deoxyribonucleotide-(2'-deoxyribose 5'-phosphate)-2'-deoxyribonucleotide-DNA = a 3'-end 2'-deoxyribonucleotide-(2,3-dehydro-2,3-deoxyribose 5'-phosphate)-DNA + a 5'-end 5'-phospho-2'-deoxyribonucleoside-DNA + H(+). Repair polymerase that plays a key role in base-excision repair. During this process, the damaged base is excised by specific DNA glycosylases, the DNA backbone is nicked at the abasic site by an apurinic/apyrimidic (AP) endonuclease, and POLB removes 5'-deoxyribose-phosphate from the preincised AP site acting as a 5'-deoxyribose-phosphate lyase (5'-dRP lyase); through its DNA polymerase activity, it adds one nucleotide to the 3' end of the arising single-nucleotide gap. Conducts 'gap-filling' DNA synthesis in a stepwise distributive fashion rather than in a processive fashion as for other DNA polymerases. It is also able to cleave sugar-phosphate bonds 3' to an intact AP site, acting as an AP lyase. The sequence is that of DNA polymerase beta (polb) from Xenopus laevis (African clawed frog).